The primary structure comprises 131 residues: Small ribosomal subunit protein uS12c (131 aa).

This sequence belongs to the universal ribosomal protein uS12 family. Part of the 30S ribosomal subunit.

It localises to the plastid. The protein localises to the chloroplast. With S4 and S5 plays an important role in translational accuracy. Located at the interface of the 30S and 50S subunits. In Stigeoclonium helveticum (Green alga), this protein is Small ribosomal subunit protein uS12c (rps12).